An 82-amino-acid polypeptide reads, in one-letter code: Histidine-rich protein (82 aa).

This is Histidine-rich protein from Plasmodium falciparum (isolate fcm17 / Senegal).